We begin with the raw amino-acid sequence, 253 residues long: Large ribosomal subunit protein mL57 (253 aa).

The transit peptide at 1-28 (MENSMMFISRSLRRPVTALNCNLQSVRT) directs the protein to the mitochondrion.

The protein belongs to the ribonuclease III family. Mitochondrion-specific ribosomal protein mL57 subfamily. As to quaternary structure, component of the mitochondrial large ribosomal subunit (mt-LSU). Mature yeast 74S mitochondrial ribosomes consist of a small (37S) and a large (54S) subunit. The 37S small subunit contains a 15S ribosomal RNA (15S mt-rRNA) and 34 different proteins. The 54S large subunit contains a 21S rRNA (21S mt-rRNA) and 46 different proteins. mL57 forms a heterodimer with mL44 and stabilizes rRNA expansion segments 1/2 at a membrane-facing protuberance close to the point of attachment of the ribosome to the translocon in the membrane.

The protein resides in the mitochondrion. Functionally, component of the mitochondrial ribosome (mitoribosome), a dedicated translation machinery responsible for the synthesis of mitochondrial genome-encoded proteins, including at least some of the essential transmembrane subunits of the mitochondrial respiratory chain. The mitoribosomes are attached to the mitochondrial inner membrane and translation products are cotranslationally integrated into the membrane. The chain is Large ribosomal subunit protein mL57 (MRPL15) from Saccharomyces cerevisiae (strain ATCC 204508 / S288c) (Baker's yeast).